A 235-amino-acid polypeptide reads, in one-letter code: Small ribosomal subunit protein uS3 (235 aa).

The region spanning 39-107 (VRQFLNKELA…PAQINIAEVK (69 aa)) is the KH type-2 domain. The tract at residues 216–235 (QPEQQPTDKPKKVPRGKGRK) is disordered.

Belongs to the universal ribosomal protein uS3 family. In terms of assembly, part of the 30S ribosomal subunit. Forms a tight complex with proteins S10 and S14.

Its function is as follows. Binds the lower part of the 30S subunit head. Binds mRNA in the 70S ribosome, positioning it for translation. The sequence is that of Small ribosomal subunit protein uS3 from Aggregatibacter actinomycetemcomitans (Actinobacillus actinomycetemcomitans).